The chain runs to 433 residues: 3-phosphoshikimate 1-carboxyvinyltransferase (433 aa).

Lys-15, Ser-16, and Arg-20 together coordinate 3-phosphoshikimate. Lys-15 is a binding site for phosphoenolpyruvate. Residues Gly-96 and Arg-124 each coordinate phosphoenolpyruvate. Residues Ser-169, Gln-171, Asp-318, and Lys-345 each contribute to the 3-phosphoshikimate site. Gln-171 lines the phosphoenolpyruvate pocket. Asp-318 acts as the Proton acceptor in catalysis. Phosphoenolpyruvate contacts are provided by Arg-349 and Arg-393.

Belongs to the EPSP synthase family. Monomer.

It is found in the cytoplasm. It carries out the reaction 3-phosphoshikimate + phosphoenolpyruvate = 5-O-(1-carboxyvinyl)-3-phosphoshikimate + phosphate. It participates in metabolic intermediate biosynthesis; chorismate biosynthesis; chorismate from D-erythrose 4-phosphate and phosphoenolpyruvate: step 6/7. In terms of biological role, catalyzes the transfer of the enolpyruvyl moiety of phosphoenolpyruvate (PEP) to the 5-hydroxyl of shikimate-3-phosphate (S3P) to produce enolpyruvyl shikimate-3-phosphate and inorganic phosphate. This is 3-phosphoshikimate 1-carboxyvinyltransferase from Chlorobium phaeovibrioides (strain DSM 265 / 1930) (Prosthecochloris vibrioformis (strain DSM 265)).